Reading from the N-terminus, the 244-residue chain is Carboxy-S-adenosyl-L-methionine synthase (244 aa).

Residues Y40, 65–67 (GCS), 90–91 (DN), 119–120 (DL), N134, and R201 each bind S-adenosyl-L-methionine.

It belongs to the class I-like SAM-binding methyltransferase superfamily. Cx-SAM synthase family. As to quaternary structure, homodimer.

It catalyses the reaction prephenate + S-adenosyl-L-methionine = carboxy-S-adenosyl-L-methionine + 3-phenylpyruvate + H2O. Its function is as follows. Catalyzes the conversion of S-adenosyl-L-methionine (SAM) to carboxy-S-adenosyl-L-methionine (Cx-SAM). The chain is Carboxy-S-adenosyl-L-methionine synthase from Geobacter metallireducens (strain ATCC 53774 / DSM 7210 / GS-15).